The following is a 162-amino-acid chain: MADGAAEIRGRLRRVVLDEDIGGALSPMQEADRNQAIADLAADNRFALGTHPDAVTILHLSVQDGRLVFDVRDEADETLQTLVLAPGPFRSMIRDYQMLLDSYATAVAEGREARIQAIDMGRRGLHNEGAELVMARLDGKVLLDFDTARRLFTLICALHRRA.

This sequence belongs to the UPF0262 family.

This is UPF0262 protein Acry_0160 from Acidiphilium cryptum (strain JF-5).